Here is a 159-residue protein sequence, read N- to C-terminus: Large ribosomal subunit protein eL29 (159 aa).

A compositionally biased stretch (basic residues) spans 1-26 (MAKSKNHTTHNQSRKWHRNGIKKPRS). Residues 1-32 (MAKSKNHTTHNQSRKWHRNGIKKPRSQRYESL) are disordered. Lysine 5 is modified (N6-methyllysine). Serine 31 carries the phosphoserine modification. Lysine 33 carries the N6-acetyllysine modification. Residues 117–127 (RLCRPKAKAKA) show a composition bias toward basic residues. The tract at residues 117–159 (RLCRPKAKAKAKAKDQTKAQAAAPASVPAQAPKRTQAPTKASE) is disordered. The segment covering 134 to 149 (KAQAAAPASVPAQAPK) has biased composition (low complexity). Residue serine 142 is modified to Phosphoserine.

The protein belongs to the eukaryotic ribosomal protein eL29 family. As to quaternary structure, component of the large ribosomal subunit.

The protein localises to the cytoplasm. In terms of biological role, component of the large ribosomal subunit. The ribosome is a large ribonucleoprotein complex responsible for the synthesis of proteins in the cell. In Homo sapiens (Human), this protein is Large ribosomal subunit protein eL29 (RPL29).